Consider the following 121-residue polypeptide: Large ribosomal subunit protein bL12 (121 aa).

The protein belongs to the bacterial ribosomal protein bL12 family. Homodimer. Part of the ribosomal stalk of the 50S ribosomal subunit. Forms a multimeric L10(L12)X complex, where L10 forms an elongated spine to which 2 to 4 L12 dimers bind in a sequential fashion. Binds GTP-bound translation factors.

Its function is as follows. Forms part of the ribosomal stalk which helps the ribosome interact with GTP-bound translation factors. Is thus essential for accurate translation. This chain is Large ribosomal subunit protein bL12, found in Leuconostoc mesenteroides subsp. mesenteroides (strain ATCC 8293 / DSM 20343 / BCRC 11652 / CCM 1803 / JCM 6124 / NCDO 523 / NBRC 100496 / NCIMB 8023 / NCTC 12954 / NRRL B-1118 / 37Y).